A 1462-amino-acid polypeptide reads, in one-letter code: MASEAGGIGGGGGGGKIRTRRCHQGPVKPYQQGRPQHQGILSRVTESVKNIVPGWLQRYFNKSENACSCSPDADEVPPWPENREDEHAIYADENTNTDDGRITPDPAGSNTEEPSTTSTASNYPDVLTRPSLHRSHLNFSVLESPALHCQPSTSSAFPIGSSGFSLVKEIKDSTSQHDDDNISTTSGFSSRASEKDIAVSKNTSLPPLWSPEAERSHSLSQHTAISSKKPAFNLSAFGTLSTSLGNSSILKTSQLGDSPFYPGKTTYGGAAAAVRQNKVRSTPYQAPVRRQMKAKQLNAQSYGVTSSTARRILQSLEKMSSPLADAKRIPSAVSSPLNSPLDRSGIDNTVFQAKKEKVDSQYPPVQRLMTPKPVSIATNRTVYFKPSLTPSGDLRKTNQRIDKKNSTVDEKSISRQNREQESGFSYPNFSIPAANGLSSGVGGGGGKMRRERTHFVAPKPPENEEVEAPLLPQISLPISSSSLPTFSFSSPVTSASPSPVSSSQPLPNKVQMTSLGSTGSPVFTFSSPIVKSTQAAVLPPASIGFTFSVPLAKTEFSGSNSSSETVLSSSAQDITAVNSSSYKKRSAPCEDPFTPAKILREGSVLDILKTPGFASPKVDSPALQPTTTSSIVYTRPAISTFSSSGIEYGESLKAGSSWQCDTCLLQNKVTDNKCIACQAAKLPLKETAKQTGTGTPSKSDKPASTSGTGFGDKFKPAIGTWDCDTCLVQNKPEAVKCVACETPKPGTGVKRALTLTVASESPVTASSSTTVTTGTLGFGDKFKRPVGSWECPVCCVCNKAEDNRCVSCTSEKPGLVSASSSSPAPVSLSSGGCLGLDKFKKPEGSWDCEVCLVQNKADSAKCIACESAKPGTKSEFKGFGTSSSLNPAPSAFKFGIPSSSSGLSQTLTSTGNFKFGDQGGFKLGTSSDSGSTNTMNTNFKFSKPTGDFKFGVLSDSKPEEVKNDNKNDNFQFGSSSGLTNPASSAPFQFGVSTLGQQEKKEELPKSSPAGFSFGAGVNNPPNAAIDTTATSENKSGFNFGTLDTKSVSVTPFTYKTTEAKKEDAPATKGGFTFGKVGSSSLPSSSMFVLGRTEEKQQEPVTSTSLVFGKKADSEEPKCQPVFSFGNSEQTKDESSKPTFSFSVAKPSGKESEQLAKATFAFGNQTNTTTDQGAAKPVFSFLNSSSSSSSAPATSSSGGIFGSSTSSSNPPVAAFVFGQASNPVSSSAFGNAAESSTSQSLLFPQESEPATTSSTAPAASPFVFGTGASSNSVSSGFTFGATTTSSSSGSSFVFGTGHSAPSASPAFGANQTPTFGQSQGASQPNPPSFGSISSSTALFSAGSQPVPPPIFGTVSSSSQPPVFGQQPSQSAFGSGTANASSVFQFGSSTTNFNFTNNNPSGVFTFGASPSTPAASAQPSGSGVFSFSQSPASFTVGSNGKNMFSSSGTSVSGRKIKTAVRRKK.

Copy 1 of the repeat occupies 237 to 238 (FG). Residues 237 to 1405 (FGTLSTSLGN…NNPSGVFTFG (1169 aa)) are 29 X 2 AA repeats of F-G. Lys354 participates in a covalent cross-link: Glycyl lysine isopeptide (Lys-Gly) (interchain with G-Cter in SUMO2). Copy 2 of the repeat occupies 648-649 (YG). The segment at 653 to 683 (KAGSSWQCDTCLLQNKVTDNKCIACQAAKLP) adopts a RanBP2-type 1 zinc-finger fold. Cys660, Cys663, Cys674, and Cys677 together coordinate Zn(2+). Residues 710–711 (FG) form repeat 3. The RanBP2-type 2 zinc-finger motif lies at 717–746 (AIGTWDCDTCLVQNKPEAVKCVACETPKPG). The Zn(2+) site is built by Cys723, Cys726, Cys737, and Cys740. Residues 778 to 779 (FG) form repeat 4. RanBP2-type zinc fingers lie at residues 785-814 (PVGSWECPVCCVCNKAEDNRCVSCTSEKPG) and 842-871 (PEGSWDCEVCLVQNKADSAKCIACESAKPG). Cys791, Cys794, Cys805, Cys808, Cys848, Cys851, Cys862, and Cys865 together coordinate Zn(2+). Tandem repeats lie at residues 894-895 (FG), 915-916 (FG), 950-951 (FG), 972-973 (FG), 989-990 (FG), 1013-1014 (FG), 1073-1074 (FG), 1107-1108 (FG), 1124-1125 (FG), 1161-1162 (FG), 1200-1201 (FG), 1216-1217 (FG), 1228-1229 (FG), 1263-1264 (FG), 1276-1277 (FT), 1278-1279 (FG), 1293-1294 (FG), 1306-1307 (FG), 1314-1315 (FG), 1328-1329 (FG), 1350-1351 (FG), 1362-1363 (FG), 1371-1372 (FG), 1384-1385 (FG), and 1404-1405 (FG).

The protein belongs to the NUP153 family. As to quaternary structure, part of the nuclear pore complex (NPC). Interacts with TPR (via coiled coil region); the interaction is direct and provides a link between the core structure and the TPR-containing nuclear basket of the nuclear pore complex (NPC). Interacts with HIKESHI. Interacts with SENP2. Interacts with XPO5. Interacts with RAN; the interaction occurs in a GTP- and GDP-independent manner. Interacts with MCM3AP; this interaction is required for MCM3AP localization at the nuclear pore complex. Interacts with MAPK1. Zn(2+) is required as a cofactor.

It is found in the nucleus. The protein resides in the nucleus membrane. The protein localises to the nuclear pore complex. Its subcellular location is the nucleoplasm. Component of the nuclear pore complex (NPC), a complex required for the trafficking across the nuclear envelope. Functions as a scaffolding element in the nuclear phase of the NPC essential for normal nucleocytoplasmic transport of proteins and mRNAs. Involved in the quality control and retention of unspliced mRNAs in the nucleus; in association with TPR, regulates the nuclear export of unspliced mRNA species bearing constitutive transport element (CTE) in a NXF1- and KHDRBS1-independent manner. Mediates TPR anchoring to the nuclear membrane at NPC. The repeat-containing domain may be involved in anchoring other components of the NPC to the pore membrane. Possible DNA-binding subunit of the nuclear pore complex (NPC). This chain is Nuclear pore complex protein Nup153 (Nup153), found in Mus musculus (Mouse).